The sequence spans 131 residues: Ribosome-binding factor A (131 aa).

It belongs to the RbfA family. As to quaternary structure, monomer. Binds 30S ribosomal subunits, but not 50S ribosomal subunits or 70S ribosomes.

The protein localises to the cytoplasm. Functionally, one of several proteins that assist in the late maturation steps of the functional core of the 30S ribosomal subunit. Associates with free 30S ribosomal subunits (but not with 30S subunits that are part of 70S ribosomes or polysomes). Required for efficient processing of 16S rRNA. May interact with the 5'-terminal helix region of 16S rRNA. The chain is Ribosome-binding factor A from Picosynechococcus sp. (strain ATCC 27264 / PCC 7002 / PR-6) (Agmenellum quadruplicatum).